The chain runs to 476 residues: Glycogen synthase (476 aa).

K15 lines the ADP-alpha-D-glucose pocket.

Belongs to the glycosyltransferase 1 family. Bacterial/plant glycogen synthase subfamily.

The enzyme catalyses [(1-&gt;4)-alpha-D-glucosyl](n) + ADP-alpha-D-glucose = [(1-&gt;4)-alpha-D-glucosyl](n+1) + ADP + H(+). It participates in glycan biosynthesis; glycogen biosynthesis. Synthesizes alpha-1,4-glucan chains using ADP-glucose. The sequence is that of Glycogen synthase from Bacillus cereus (strain ZK / E33L).